A 90-amino-acid chain; its full sequence is Molybdopterin synthase sulfur carrier subunit (90 aa).

Gly90 is subject to 1-thioglycine; alternate. Gly90 carries the post-translational modification Glycyl adenylate; alternate.

The protein belongs to the MoaD family. MOCS2A subfamily. Heterotetramer; composed of 2 small (Mocs2A) and 2 large (Mocs2B) subunits. In terms of processing, C-terminal thiocarboxylation occurs in 2 steps, it is first acyl-adenylated (-COAMP) via the hesA/moeB/thiF part of MOCS3, then thiocarboxylated (-COSH) via the rhodanese domain of MOCS3.

The protein localises to the cytoplasm. The protein operates within cofactor biosynthesis; molybdopterin biosynthesis. In terms of biological role, acts as a sulfur carrier required for molybdopterin biosynthesis. Component of the molybdopterin synthase complex that catalyzes the conversion of precursor Z into molybdopterin by mediating the incorporation of 2 sulfur atoms into precursor Z to generate a dithiolene group. In the complex, serves as sulfur donor by being thiocarboxylated (-COSH) at its C-terminus by MOCS3. After interaction with Mocs2B, the sulfur is then transferred to precursor Z to form molybdopterin. The chain is Molybdopterin synthase sulfur carrier subunit from Drosophila yakuba (Fruit fly).